We begin with the raw amino-acid sequence, 186 residues long: HTH-type transcriptional regulator Hpr (186 aa).

The 145-residue stretch at 13-157 folds into the HTH marR-type domain; sequence AMLYSQRIAQ…VMAVIRNIYG (145 aa). A DNA-binding region (H-T-H motif) is located at residues 63 to 86; sequence ISDVAKFGVMHVSTAFNFSKKLEE.

Homodimer.

Negative regulator of protease production and sporulation. The polypeptide is HTH-type transcriptional regulator Hpr (Lysinibacillus sphaericus (strain C3-41)).